Consider the following 146-residue polypeptide: Large ribosomal subunit protein uL15 (146 aa).

The tract at residues 1–51 (MKLHELQPAPGSRKKAVRVGRGIGSGNGKTSGRGQKGQNARSGGGVRLGFE) is disordered. 2 stretches are compositionally biased toward gly residues: residues 21–35 (RGIG…GRGQ) and 42–51 (SGGGVRLGFE).

It belongs to the universal ribosomal protein uL15 family. Part of the 50S ribosomal subunit.

In terms of biological role, binds to the 23S rRNA. The polypeptide is Large ribosomal subunit protein uL15 (Geobacillus kaustophilus (strain HTA426)).